Reading from the N-terminus, the 371-residue chain is Cytochrome b (371 aa).

4 helical membrane-spanning segments follow: residues 25-45 (FGSMLLACTSMQVLTGFFLAV), 69-90 (WMMQNLHAIGASMFFICIYIHI), 105-125 (WLSGTTLLIMLMATAFFGYVL), and 170-190 (FSALHFILSFGIISLLSLHIM). His-75 and His-89 together coordinate heme b. Heme b-binding residues include His-174 and His-188. Residue His-193 participates in a ubiquinone binding. Transmembrane regions (helical) follow at residues 218 to 238 (YKDLLMLSLVILMLLMTVSFL), 280 to 300 (LGGALALAMSIMILLTAPFTH), 312 to 332 (IMQLMFWTLVATFAVITWSAT), and 339 to 358 (FTVISQIASTIYFLFLIMNP).

Belongs to the cytochrome b family. As to quaternary structure, the cytochrome bc1 complex contains 3 respiratory subunits (MT-CYB, CYC1 and UQCRFS1), 2 core proteins (UQCRC1 and UQCRC2) and probably 6 low-molecular weight proteins. Requires heme b as cofactor.

It localises to the mitochondrion inner membrane. In terms of biological role, component of the ubiquinol-cytochrome c reductase complex (complex III or cytochrome b-c1 complex) that is part of the mitochondrial respiratory chain. The b-c1 complex mediates electron transfer from ubiquinol to cytochrome c. Contributes to the generation of a proton gradient across the mitochondrial membrane that is then used for ATP synthesis. This is Cytochrome b (MT-CYB) from Eryx elegans (Central Asian sand boa).